Consider the following 341-residue polypeptide: HTH-type transcriptional repressor PurR (341 aa).

The region spanning 2-56 is the HTH lacI-type domain; sequence ATIKDVAKRAGVSTTTVSHVINKTRFVADETREAVWVAIKELHYSPSAVARSLKV. The segment at residues 4–23 is a DNA-binding region (H-T-H motif); it reads IKDVAKRAGVSTTTVSHVIN. Residues 48 to 56 mediate DNA binding; the sequence is SAVARSLKV. Positions 73, 190, 192, 221, and 275 each coordinate hypoxanthine.

In terms of assembly, homodimer.

Its pathway is purine metabolism; purine nucleotide biosynthesis [regulation]. Is the main repressor of the genes involved in the de novo synthesis of purine nucleotides, regulating purB, purC, purEK, purF, purHD, purL, purMN and guaBA expression. PurR is allosterically activated to bind its cognate DNA by binding the purine corepressors, hypoxanthine or guanine, thereby effecting transcription repression. The sequence is that of HTH-type transcriptional repressor PurR from Erwinia tasmaniensis (strain DSM 17950 / CFBP 7177 / CIP 109463 / NCPPB 4357 / Et1/99).